We begin with the raw amino-acid sequence, 526 residues long: D-arabinono-1,4-lactone oxidase (526 aa).

An FAD-binding PCMH-type domain is found at 19 to 193 (YSAKPERYFQ…VSATIRVVPG (175 aa)). The residue at position 56 (histidine 56) is a Pros-8alpha-FAD histidine.

The protein belongs to the oxygen-dependent FAD-linked oxidoreductase family. In terms of assembly, monomer. It depends on FAD as a cofactor. In terms of processing, the N-terminus is blocked.

It localises to the mitochondrion membrane. The enzyme catalyses D-arabinono-1,4-lactone + O2 = dehydro-D-arabinono-1,4-lactone + H2O2 + H(+). It functions in the pathway cofactor biosynthesis; D-erythroascorbate biosynthesis; dehydro-D-arabinono-1,4-lactone from D-arabinose: step 2/2. Functionally, can oxidize L-gulono-1,4-lactone as well as D-arabinono-1,4-lactone and L-galactono-1,4-lactone. The protein is D-arabinono-1,4-lactone oxidase (ALO1) of Saccharomyces cerevisiae (strain ATCC 204508 / S288c) (Baker's yeast).